The sequence spans 390 residues: Chorismate synthase (390 aa).

2 residues coordinate NADP(+): R39 and R45. Residues 132–134, 253–254, G298, 313–317, and R339 each bind FMN; these read RSS, NA, and KPIPT.

The protein belongs to the chorismate synthase family. Homotetramer. The cofactor is FMNH2.

The enzyme catalyses 5-O-(1-carboxyvinyl)-3-phosphoshikimate = chorismate + phosphate. Its pathway is metabolic intermediate biosynthesis; chorismate biosynthesis; chorismate from D-erythrose 4-phosphate and phosphoenolpyruvate: step 7/7. Catalyzes the anti-1,4-elimination of the C-3 phosphate and the C-6 proR hydrogen from 5-enolpyruvylshikimate-3-phosphate (EPSP) to yield chorismate, which is the branch point compound that serves as the starting substrate for the three terminal pathways of aromatic amino acid biosynthesis. This reaction introduces a second double bond into the aromatic ring system. This Bacillus pumilus (strain SAFR-032) protein is Chorismate synthase.